The following is a 676-amino-acid chain: Probable potassium transport system protein Kup (676 aa).

The next 12 membrane-spanning stretches (helical) occupy residues 14-34 (GLLIAIGIVYGDIGTSPLYVM), 56-76 (ISLILWTVTLLTTVQTVIIAL), 97-117 (AAWLVWPALIGGAAILADGTL), 142-162 (VSNQTTVLVITIVILLVLFSI), 173-193 (AFGPIMLVWFAFLGVMGLINI), 219-239 (AGFAILGSIFLATTGAEALYS), 252-272 (SWPFVFVCLSLNYFGQGVWIL), 296-316 (LASIVLATLAAIIASQALITG), 345-365 (IYIPAVNKMLGITTIALVLFF), 376-396 (GLSITISMLTTTILLYEWLVL), 402-422 (LANLLFVIFFSTINILFMGSS), and 429-449 (GGYVSLLITLLIASVMVVWYF).

It belongs to the HAK/KUP transporter (TC 2.A.72) family.

It is found in the cell membrane. It carries out the reaction K(+)(in) + H(+)(in) = K(+)(out) + H(+)(out). In terms of biological role, transport of potassium into the cell. Likely operates as a K(+):H(+) symporter. The protein is Probable potassium transport system protein Kup of Lactobacillus delbrueckii subsp. bulgaricus (strain ATCC BAA-365 / Lb-18).